A 725-amino-acid chain; its full sequence is ATP-dependent RNA helicase DRS1 (725 aa).

The interval 14–184 is disordered; the sequence is DFVPTISDSE…AEEKVEEDTA (171 aa). Residues 21-33 show a composition bias toward acidic residues; that stretch reads DSEEDVPDLDSDE. Basic and acidic residues-rich tracts occupy residues 85 to 95 and 107 to 116; these read EEKKDVDLDKI and HVDEAEKSES. Composition is skewed to acidic residues over residues 117–127 and 139–184; these read EESESDDEDLA and PEGE…EDTA. Residues 206 to 234 carry the Q motif motif; that stretch reads KTFNDLALSRPVMKGLSNLGYVKPSPIQS. One can recognise a Helicase ATP-binding domain in the interval 237–412; sequence IPIALLGKDI…SLSLKRPVRI (176 aa). 250-257 provides a ligand contact to ATP; it reads AVTGSGKT. Positions 360–363 match the DEAD box motif; it reads DEAD. A Helicase C-terminal domain is found at 423–613; it reads KLTQEFVRIR…NMDQTVQDIL (191 aa). The stretch at 607 to 686 forms a coiled coil; sequence QTVQDILVEE…KRKRNEAMED (80 aa). Residues 646–725 are disordered; that stretch reads PKRTWFQSEK…KKKGKSKGKR (80 aa). Residues 669 to 707 are compositionally biased toward basic and acidic residues; sequence TKKEVNSKKRKRNEAMEDGHKRSYKKTQSDRTADQERTM. Basic residues predominate over residues 708–725; it reads KKQAKANGKKKGKSKGKR.

This sequence belongs to the DEAD box helicase family. DDX27/DRS1 subfamily. In terms of assembly, associates with pre-ribosomal particles.

The protein localises to the nucleus. The protein resides in the nucleolus. The enzyme catalyses ATP + H2O = ADP + phosphate + H(+). Functionally, ATP-binding RNA helicase involved in ribosome assembly. In Candida glabrata (strain ATCC 2001 / BCRC 20586 / JCM 3761 / NBRC 0622 / NRRL Y-65 / CBS 138) (Yeast), this protein is ATP-dependent RNA helicase DRS1 (DRS1).